The following is a 98-amino-acid chain: Derivative of benzaldehyde biosynthesis cluster protein C (98 aa).

Belongs to the YciI family.

Its pathway is secondary metabolite biosynthesis. Its function is as follows. Part of the gene cluster that mediates the biosynthesis of the antibiotic 2,4-dihydroxy-3-methyl-6-(2-oxopropyl)benzaldehyde (DHMBA) and its derivatives. The direct non-reducing polyketide synthase dbaI product is 2,4-dihydroxy-3-methyl-6-(2-oxopropyl)benzaldehyde (DHMBA), produced by condensation of one acetyl-CoA starter unit with 4 malonyl-CoA units and one methylation step. The FAD-dependent monooxygenase dbaH is responsible for the synthesis of yellow pigments derived from the oxidation of DHMBA. The roles of dbaB, C, E and F have still to be determined. The polypeptide is Derivative of benzaldehyde biosynthesis cluster protein C (Emericella nidulans (strain FGSC A4 / ATCC 38163 / CBS 112.46 / NRRL 194 / M139) (Aspergillus nidulans)).